The sequence spans 188 residues: Phosphoheptose isomerase (188 aa).

Residues 33–188 (VTASLRAGGK…CGLVEDALCS (156 aa)) form the SIS domain. 48–50 (NGG) serves as a coordination point for substrate. Zn(2+)-binding residues include histidine 57 and glutamate 61. Residues glutamate 61, 90–91 (ND), 116–118 (STS), serine 121, and glutamine 168 contribute to the substrate site. Glutamine 168 and histidine 176 together coordinate Zn(2+).

This sequence belongs to the SIS family. GmhA subfamily. In terms of assembly, homotetramer. Requires Zn(2+) as cofactor.

The protein localises to the cytoplasm. It catalyses the reaction 2 D-sedoheptulose 7-phosphate = D-glycero-alpha-D-manno-heptose 7-phosphate + D-glycero-beta-D-manno-heptose 7-phosphate. Its pathway is carbohydrate biosynthesis; D-glycero-D-manno-heptose 7-phosphate biosynthesis; D-glycero-alpha-D-manno-heptose 7-phosphate and D-glycero-beta-D-manno-heptose 7-phosphate from sedoheptulose 7-phosphate: step 1/1. Its function is as follows. Catalyzes the isomerization of sedoheptulose 7-phosphate in D-glycero-D-manno-heptose 7-phosphate. The chain is Phosphoheptose isomerase from Rhodospirillum rubrum (strain ATCC 11170 / ATH 1.1.1 / DSM 467 / LMG 4362 / NCIMB 8255 / S1).